A 422-amino-acid chain; its full sequence is Chorismate synthase (422 aa).

2 residues coordinate NADP(+): R43 and R49. Residues 143–145 (RSS), 264–265 (QA), G309, 324–328 (KPIST), and R350 contribute to the FMN site.

Belongs to the chorismate synthase family. In terms of assembly, homotetramer. It depends on FMNH2 as a cofactor.

The enzyme catalyses 5-O-(1-carboxyvinyl)-3-phosphoshikimate = chorismate + phosphate. The protein operates within metabolic intermediate biosynthesis; chorismate biosynthesis; chorismate from D-erythrose 4-phosphate and phosphoenolpyruvate: step 7/7. Catalyzes the anti-1,4-elimination of the C-3 phosphate and the C-6 proR hydrogen from 5-enolpyruvylshikimate-3-phosphate (EPSP) to yield chorismate, which is the branch point compound that serves as the starting substrate for the three terminal pathways of aromatic amino acid biosynthesis. This reaction introduces a second double bond into the aromatic ring system. The polypeptide is Chorismate synthase (Corynebacterium jeikeium (strain K411)).